Reading from the N-terminus, the 138-residue chain is uncharacterized protein (138 aa).

3 consecutive transmembrane segments (helical) span residues 12–32 (LHFL…VLPI), 62–82 (LIAV…FSVL), and 111–131 (FHWV…LICS).

Its subcellular location is the cell membrane. This is an uncharacterized protein from Haemophilus influenzae (strain ATCC 51907 / DSM 11121 / KW20 / Rd).